The primary structure comprises 943 residues: Isoleucine--tRNA ligase (943 aa).

Residues 59–69 (PYANGQIHLGH) carry the 'HIGH' region motif. L-isoleucyl-5'-AMP is bound at residue glutamate 577. The short motif at 618–622 (KMSKS) is the 'KMSKS' region element. Position 621 (lysine 621) interacts with ATP. Zn(2+) is bound by residues cysteine 906, cysteine 909, cysteine 926, and cysteine 929.

The protein belongs to the class-I aminoacyl-tRNA synthetase family. IleS type 1 subfamily. Monomer. It depends on Zn(2+) as a cofactor.

The protein resides in the cytoplasm. The enzyme catalyses tRNA(Ile) + L-isoleucine + ATP = L-isoleucyl-tRNA(Ile) + AMP + diphosphate. Its function is as follows. Catalyzes the attachment of isoleucine to tRNA(Ile). As IleRS can inadvertently accommodate and process structurally similar amino acids such as valine, to avoid such errors it has two additional distinct tRNA(Ile)-dependent editing activities. One activity is designated as 'pretransfer' editing and involves the hydrolysis of activated Val-AMP. The other activity is designated 'posttransfer' editing and involves deacylation of mischarged Val-tRNA(Ile). In Xylella fastidiosa (strain 9a5c), this protein is Isoleucine--tRNA ligase.